We begin with the raw amino-acid sequence, 374 residues long: Histidinol-phosphate aminotransferase (374 aa).

Position 215 is an N6-(pyridoxal phosphate)lysine (K215).

Belongs to the class-II pyridoxal-phosphate-dependent aminotransferase family. Histidinol-phosphate aminotransferase subfamily. In terms of assembly, homodimer. Pyridoxal 5'-phosphate serves as cofactor.

The catalysed reaction is L-histidinol phosphate + 2-oxoglutarate = 3-(imidazol-4-yl)-2-oxopropyl phosphate + L-glutamate. The protein operates within amino-acid biosynthesis; L-histidine biosynthesis; L-histidine from 5-phospho-alpha-D-ribose 1-diphosphate: step 7/9. The sequence is that of Histidinol-phosphate aminotransferase from Yersinia enterocolitica serotype O:8 / biotype 1B (strain NCTC 13174 / 8081).